Here is a 140-residue protein sequence, read N- to C-terminus: Cysteine desulfuration protein SufE (140 aa).

The Cysteine persulfide intermediate role is filled by cysteine 51.

Belongs to the SufE family. In terms of assembly, homodimer. Interacts with SufS.

It localises to the cytoplasm. It functions in the pathway cofactor biosynthesis; iron-sulfur cluster biosynthesis. In terms of biological role, participates in cysteine desulfuration mediated by SufS. Cysteine desulfuration mobilizes sulfur from L-cysteine to yield L-alanine and constitutes an essential step in sulfur metabolism for biosynthesis of a variety of sulfur-containing biomolecules. Functions as a sulfur acceptor for SufS, by mediating the direct transfer of the sulfur atom from the S-sulfanylcysteine of SufS, an intermediate product of cysteine desulfuration process. The polypeptide is Cysteine desulfuration protein SufE (Yersinia pseudotuberculosis serotype O:1b (strain IP 31758)).